A 269-amino-acid polypeptide reads, in one-letter code: Novel plant SNARE 13 (269 aa).

Over 1–217 the chain is Cytoplasmic; sequence MASNLPMSPQ…IGRQVATDKC (217 aa). The stretch at 33 to 94 forms a coiled coil; it reads DKIKDSTRQS…KQSMIKELNS (62 aa). A Phosphoserine modification is found at S74. The 63-residue stretch at 146–208 folds into the t-SNARE coiled-coil homology domain; the sequence is MKRMDETDQA…KKASQLVKEI (63 aa). Residues 218-238 form a helical; Anchor for type IV membrane protein membrane-spanning segment; the sequence is IMGFLFLIVCGVVAIIIVKIV. Over 239–269 the chain is Vesicular; the sequence is NPNNKDIRDIPGLAPPAQSRKLLYLRNQDYM.

Belongs to the novel plant SNARE family.

It localises to the membrane. Functionally, vesicle trafficking protein that functions in the secretory pathway. The sequence is that of Novel plant SNARE 13 (NPSN13) from Arabidopsis thaliana (Mouse-ear cress).